A 587-amino-acid polypeptide reads, in one-letter code: Transport inhibitor response 1-like protein Os05g0150500 (587 aa).

In terms of domain architecture, F-box spans 6-63; sequence SRAACAAAAPPWHSLPDEVWEHAFSFLPAAADRGAAAGACSSWLRAERRSRRRLAVAN. Residue lysine 85 participates in 1D-myo-inositol hexakisphosphate binding. The interval 92–93 is interaction with auxin-responsive proteins; that stretch reads DF. 1D-myo-inositol hexakisphosphate is bound by residues 124–125 and arginine 355; that span reads KR. An interaction with auxin-responsive proteins region spans residues 358 to 363; the sequence is PSDPFG. 409 to 411 provides a ligand contact to 1D-myo-inositol hexakisphosphate; sequence CFR. The tract at residues 413–417 is interaction with auxin-responsive proteins; sequence CILEP. Arginine 444 is a binding site for 1D-myo-inositol hexakisphosphate. Positions 472–473 are interaction with auxin-responsive proteins; it reads AF. 1D-myo-inositol hexakisphosphate-binding positions include 492 to 493 and arginine 517; that span reads KK.

Part of a SCF (SKP1-cullin-F-box) protein ligase complex. May interact with auxin and auxin-responsive proteins.

The protein resides in the nucleus. The protein operates within protein modification; protein ubiquitination. The sequence is that of Transport inhibitor response 1-like protein Os05g0150500 from Oryza sativa subsp. japonica (Rice).